Consider the following 381-residue polypeptide: Galactose-1-phosphate uridylyltransferase (381 aa).

Zn(2+) is bound by residues C65 and C68. 90–91 serves as a coordination point for UDP-alpha-D-glucose; the sequence is ND. Residue H131 participates in Zn(2+) binding. A UDP-alpha-D-glucose-binding site is contributed by N175. H186 contacts Zn(2+). H188 acts as the Tele-UMP-histidine intermediate in catalysis. Q190 provides a ligand contact to UDP-alpha-D-glucose. Residues E204, H306, H323, and H325 each contribute to the Fe cation site. Residues 338–341 and 343–344 contribute to the UDP-alpha-D-glucose site; these read KFMV and FE.

It belongs to the galactose-1-phosphate uridylyltransferase type 1 family. Homodimer. It depends on Zn(2+) as a cofactor.

It carries out the reaction alpha-D-galactose 1-phosphate + UDP-alpha-D-glucose = alpha-D-glucose 1-phosphate + UDP-alpha-D-galactose. It functions in the pathway carbohydrate metabolism; galactose metabolism. This is Galactose-1-phosphate uridylyltransferase (GAL7) from Cryptococcus neoformans var. neoformans serotype D (strain B-3501A) (Filobasidiella neoformans).